Reading from the N-terminus, the 500-residue chain is MTLVDTRTPDPKRLIPGATGDWEIVIGMEVHAQVLSQSKLFSGASTTFGNAPNDNVSLVDAAMPGMLPVINEECVRQAVRTGLGLKAKINKRSIFDRKNYFYPDLPQGYQISQFKDPIVGEGKIIISLGPDRQGNFEDIEIGIERLHLEQDAGKSMHDQHPTMSYVDLNRSGVALMEIVSKPDMRSSDEAKAYMTKLRSIVRYLGTCDGNMDEGSMRADVNVSVRKPGGEFGTRCEIKNVNSIRFIGQAIEYEARRQIAILEDGGSIDQETRLFDPGKGETRSMRSKEDAHDYRYFPDPDLLPLEFDDAFVQALKKDLPELPDDKKARFVASLGLSVYDASVLVSEKAIADYYEAVAAGRDGKIAANWVINDLLGALNKAGKGIEETPVSPAQLGGIIDLIKAETISGKIAKDLFEIVFNEGGDPADIVESRGMKQVTDTGAIEKAVDEIIAANPDQVAKVLAKPTLAGWFVGQVMKATGGKANPQAVQALVKAKLGLEE.

The protein belongs to the GatB/GatE family. GatB subfamily. Heterotrimer of A, B and C subunits.

The enzyme catalyses L-glutamyl-tRNA(Gln) + L-glutamine + ATP + H2O = L-glutaminyl-tRNA(Gln) + L-glutamate + ADP + phosphate + H(+). The catalysed reaction is L-aspartyl-tRNA(Asn) + L-glutamine + ATP + H2O = L-asparaginyl-tRNA(Asn) + L-glutamate + ADP + phosphate + 2 H(+). Allows the formation of correctly charged Asn-tRNA(Asn) or Gln-tRNA(Gln) through the transamidation of misacylated Asp-tRNA(Asn) or Glu-tRNA(Gln) in organisms which lack either or both of asparaginyl-tRNA or glutaminyl-tRNA synthetases. The reaction takes place in the presence of glutamine and ATP through an activated phospho-Asp-tRNA(Asn) or phospho-Glu-tRNA(Gln). The sequence is that of Aspartyl/glutamyl-tRNA(Asn/Gln) amidotransferase subunit B from Allorhizobium ampelinum (strain ATCC BAA-846 / DSM 112012 / S4) (Agrobacterium vitis (strain S4)).